Here is a 507-residue protein sequence, read N- to C-terminus: MEFLLGNPFSTPVGQCLEKATDGSLQSEDWTLNMEICDIINETEEGPKDAIRALKKRLNGNRNYREVMLALTVLETCVKNCGHRFHILVANRDFIDSVLVKIISPKNNPPTIVQDKVLALIQAWADAFRSSPDLTGVVHIYEELKRKGVEFPMADLDALSPIHTPQRSVPEVDPAATMPRSQSQQRTSAGSYSSPPPAPYSAPQAPALSVTGPITANSEQIARLRSELDVVRGNTKVMSEMLTEMVPGQEDSSDLELLQELNRTCRAMQQRIVELISRVSNEEVTEELLHVNDDLNNVFLRYERFERYRSGRSVQNASNGVLNEVTEDNLIDLGPGSPAVVSPMVGNTAPPSSLSSQLAGLDLGTESVSGTLSSLQQCNPRDGFDMFAQTRGNSLAEQRKTVTYEDPQAVGGLASALDNRKQSSEGIPVAQPSVMDDIEVWLRTDLKGDDLEEGVTSEEFDKFLEERAKAAEMVPDLPSPPMEAPAPASNPSGRKKPERSEDALFAL.

Residues 20–152 form the VHS domain; sequence ATDGSLQSED…ELKRKGVEFP (133 aa). Ser-160 carries the post-translational modification Phosphoserine. Residues 162 to 210 are disordered; it reads IHTPQRSVPEVDPAATMPRSQSQQRTSAGSYSSPPPAPYSAPQAPALSV. Thr-164 bears the Phosphothreonine mark. Residues 219-307 enclose the GAT domain; that stretch reads EQIARLRSEL…VFLRYERFER (89 aa). The Clathrin-binding signature appears at 329–334; it reads NLIDLG. The interval 467–507 is disordered; it reads RAKAAEMVPDLPSPPMEAPAPASNPSGRKKPERSEDALFAL. The segment covering 498–507 has biased composition (basic and acidic residues); the sequence is ERSEDALFAL.

This sequence belongs to the TOM1 family. As to quaternary structure, interacts with clathrin, SRC and TOLLIP. Interacts with MYO6. Ubiquitously expressed with higher expression in heart and skeletal muscle.

Its function is as follows. Acts as a MYO6/Myosin VI adapter protein that targets myosin VI to endocytic structures. May also play a role in recruiting clathrin to endosomes. May regulate growth factor-induced mitogenic signaling. The polypeptide is TOM1-like protein 2 (TOM1L2) (Homo sapiens (Human)).